The sequence spans 293 residues: HTH-type transcriptional regulator ArgP (293 aa).

The HTH lysR-type domain maps to 4–60 (PDYRTLQALDAVIRERGFERAAQKLCITQSAVSQRIKQLENLFGQPLLVRTIPPHPT). Residues 21 to 40 (FERAAQKLCITQSAVSQRIK) constitute a DNA-binding region (H-T-H motif).

It belongs to the LysR transcriptional regulatory family. Homodimer.

Its function is as follows. Controls the transcription of genes involved in arginine and lysine metabolism. The polypeptide is HTH-type transcriptional regulator ArgP (Sodalis glossinidius (strain morsitans)).